The primary structure comprises 590 residues: Glutamine--tRNA ligase (590 aa).

Residues P55 to H65 carry the 'HIGH' region motif. ATP contacts are provided by residues E56 to N58 and H62 to S68. L-glutamine is bound by residues D93 and Y238. ATP is bound by residues T257 and R292–L293. The 'KMSKS' region signature appears at I299–R303.

This sequence belongs to the class-I aminoacyl-tRNA synthetase family. Monomer.

The protein resides in the cytoplasm. The catalysed reaction is tRNA(Gln) + L-glutamine + ATP = L-glutaminyl-tRNA(Gln) + AMP + diphosphate. In Polynucleobacter necessarius subsp. necessarius (strain STIR1), this protein is Glutamine--tRNA ligase.